The chain runs to 450 residues: Protein tweety homolog 1 (450 aa).

At 1–43 (MGAPPGYRPSAWVHLLHQLPRADFQLRPVPSGFAPQEQEYQQA) the chain is on the extracellular side. A helical membrane pass occupies residues 44–64 (LLLVAALAGLGLGLSLIFIAV). Over 65–88 (YLIRFCCCRPPEPPGSKTPSPGGG) the chain is Cytoplasmic. Residues 89–109 (CVTWSCIVALLAGCIGIGIGF) traverse the membrane as a helical segment. Residues 110–214 (YGNSETSDGV…DVSFVEEYRW (105 aa)) lie on the Extracellular side of the membrane. Asn130 is a glycosylation site (N-linked (GlcNAc...) asparagine). Residues 215–235 (LAYVLLLLLELLVCLFTLLGL) form a helical membrane-spanning segment. The Cytoplasmic portion of the chain corresponds to 236–240 (AKQSK). A helical membrane pass occupies residues 241 to 261 (WLVIVMTVMSLLVLVLSWGSM). Residues 262-390 (GLEAATAVGL…LRGLCEDALE (129 aa)) lie on the Extracellular side of the membrane. N-linked (GlcNAc...) asparagine glycans are attached at residues Asn284 and Asn355. Cys303 and Cys370 are disulfide-bonded. The helical transmembrane segment at 391–411 (GLLFLLLFSLLSAGALATALC) threads the bilayer. Over 412–450 (SLPRAWALFPPSDDYDDTDDDDPFNPQESKRFVQWQSSI) the chain is Cytoplasmic. The tract at residues 428–450 (DTDDDDPFNPQESKRFVQWQSSI) is disordered. Phosphoserine is present on Ser440.

It belongs to the tweety family. In terms of assembly, homotetramer; disulfide-linked. Homodimer. Post-translationally, N-glycosylated. Contains high-mannose, hybrid and complex oligosaccharides.

It is found in the cell membrane. The enzyme catalyses chloride(in) = chloride(out). It carries out the reaction L-glutamate(out) = L-glutamate(in). In terms of biological role, calcium-independent, swelling-dependent volume-regulated anion channel (VRAC-swell) which plays a pivotal role in the process of regulatory volume decrease (RVD) in the brain through the efflux of anions like chloride and organic osmolytes like glutamate. The protein is Protein tweety homolog 1 (TTYH1) of Macaca fascicularis (Crab-eating macaque).